The primary structure comprises 560 residues: MAFSDLLEQVGSTGRFQVLHVTLLSMPILMMASHNLLQNFVAAVPPHHCQPHANLSMSSTDAVDVLRATVPLGLNGKLERCKRYTTPQWQILSLNTSESLWDESMAETETQSCEDGWFYNMTEMSSTIITEWDLVCDYRALKQMSQTTYMGGVLVGAIVFGGLSDRFGRRVLLLISNLMMAIGGTCVAFSTSFTMFCVFRVCCGMALSGLVLNSFSLIVEWIPTRVRTVVGTGTGYCYTTGQLILAAVAYCIRDWRWLTLAVSLPFYVSFLYSWWFLESARWLVLTKNPEQAVKNLKTVARINGRSAEGDKIDLEMLQESMKKEMACSKGSYSALDLLRTSTMRTITICLSAVWFSTSFAYYGLSMDLQKFGVSIYLIQIIFGAVDIPAKIIVTICMSMLGRRPSQCGALVLAGIMILINLLVPSDLQMLRTSLAVIGKGCLAASFNCCYLYAGELYPTVIRQSGMGWVSMMARFGAMVAPMVLLLGDDYPWIPGFIYGGAPIVSGIFAFFLPETLSQPLPDTIQDIDDRGLARTNSKRLPEKLDLAMKDPSCVLLKESV.

Over 1–15 the chain is Cytoplasmic; it reads MAFSDLLEQVGSTGR. A helical membrane pass occupies residues 16–36; sequence FQVLHVTLLSMPILMMASHNL. At 37 to 143 the chain is on the extracellular side; the sequence is LQNFVAAVPP…LVCDYRALKQ (107 aa). A helical membrane pass occupies residues 144-164; it reads MSQTTYMGGVLVGAIVFGGLS. The Cytoplasmic segment spans residues 165 to 170; the sequence is DRFGRR. Residues 171–191 form a helical membrane-spanning segment; it reads VLLLISNLMMAIGGTCVAFST. The Extracellular segment spans residues 192-201; the sequence is SFTMFCVFRV. Residues 202–222 form a helical membrane-spanning segment; it reads CCGMALSGLVLNSFSLIVEWI. The Cytoplasmic portion of the chain corresponds to 223–228; that stretch reads PTRVRT. Residues 229–249 form a helical membrane-spanning segment; sequence VVGTGTGYCYTTGQLILAAVA. Topologically, residues 250 to 256 are extracellular; that stretch reads YCIRDWR. Residues 257-277 form a helical membrane-spanning segment; sequence WLTLAVSLPFYVSFLYSWWFL. The Cytoplasmic segment spans residues 278-345; sequence ESARWLVLTK…DLLRTSTMRT (68 aa). The chain crosses the membrane as a helical span at residues 346–366; sequence ITICLSAVWFSTSFAYYGLSM. The Extracellular portion of the chain corresponds to 367-374; sequence DLQKFGVS. The chain crosses the membrane as a helical span at residues 375–395; it reads IYLIQIIFGAVDIPAKIIVTI. The Cytoplasmic segment spans residues 396–406; the sequence is CMSMLGRRPSQ. A helical transmembrane segment spans residues 407 to 427; the sequence is CGALVLAGIMILINLLVPSDL. Residues 428–433 lie on the Extracellular side of the membrane; it reads QMLRTS. A helical transmembrane segment spans residues 434-454; it reads LAVIGKGCLAASFNCCYLYAG. Residues 455-465 are Cytoplasmic-facing; sequence ELYPTVIRQSG. A helical membrane pass occupies residues 466 to 486; the sequence is MGWVSMMARFGAMVAPMVLLL. At 487–491 the chain is on the extracellular side; that stretch reads GDDYP. The helical transmembrane segment at 492-512 threads the bilayer; that stretch reads WIPGFIYGGAPIVSGIFAFFL. Topologically, residues 513–560 are cytoplasmic; it reads PETLSQPLPDTIQDIDDRGLARTNSKRLPEKLDLAMKDPSCVLLKESV.

It belongs to the major facilitator (TC 2.A.1) superfamily. Organic cation transporter (TC 2.A.1.19) family. Post-translationally, glycosylated. Glycosylation is necessary for proper targeting of the transporter to the plasma membrane.

The protein resides in the cell membrane. It is found in the basolateral cell membrane. It localises to the basal cell membrane. Its function is as follows. Involved in the renal elimination of endogenous and exogenous organic anions. Functions as organic anion exchanger when the uptake of one molecule of organic anion is coupled with an efflux of one molecule of endogenous dicarboxylic acid (glutarate, ketoglutarate, etc). Mediates the sodium-independent uptake of p-aminohippurate (PAH), 2,3-dimercapto-1-propanesulfonic acid (DMPS), cidofovir, adefovir, 9-(2-phosphonylmethoxyethyl) guanine (PMEG), 9-(2-phosphonylmethoxyethyl) diaminopurine (PMEDAP), ochratoxin (OTA), acyclovir (ACV), 3'-azido-3-'deoxythymidine (AZT), cimetidine (CMD), 2,4-dichloro-phenoxyacetate (2,4-D), hippurate (HA), indoleacetate (IA), indoxyl sulfate (IS) and 3-carboxy-4-methyl-5-propyl-2-furanpropionate (CMPF) and edaravone sulfate. PAH uptake is inhibited by p-chloromercuribenzenesulphonate (PCMBS), diethyl pyrocarbonate (DEPC), indomethacin, sulindac, diclofenac, carprofen, okadaic acid, benzothiazolylcysteine (BTC), S-chlorotrifluoroethylcysteine (CTFC), cysteine S-conjugates S-dichlorovinylcysteine (DCVC), furosemide, steviol, phorbol 12-myristate 13-acetate (PMA), calcium ionophore A23187, benzylpenicillin, bumetamide, losartan, probenecid, phenol red, urate, glutarate and alpha-ketoglutarate. The polypeptide is Solute carrier family 22 member 6 (slc22a6) (Danio rerio (Zebrafish)).